A 409-amino-acid chain; its full sequence is uncharacterized protein (409 aa).

The first 29 residues, 1 to 29, serve as a signal peptide directing secretion; it reads MARSRCVHRVVHQAACIGVIGLSTSALTT. C30 carries the N-palmitoyl cysteine lipid modification. C30 is lipidated: S-diacylglycerol cysteine.

This sequence belongs to the TP013X lipoprotein family.

It is found in the cell membrane. This is an uncharacterized protein from Treponema pallidum (strain Nichols).